A 294-amino-acid chain; its full sequence is Phosphoribosylaminoimidazole-succinocarboxamide synthase (294 aa).

The protein belongs to the SAICAR synthetase family.

It carries out the reaction 5-amino-1-(5-phospho-D-ribosyl)imidazole-4-carboxylate + L-aspartate + ATP = (2S)-2-[5-amino-1-(5-phospho-beta-D-ribosyl)imidazole-4-carboxamido]succinate + ADP + phosphate + 2 H(+). Its pathway is purine metabolism; IMP biosynthesis via de novo pathway; 5-amino-1-(5-phospho-D-ribosyl)imidazole-4-carboxamide from 5-amino-1-(5-phospho-D-ribosyl)imidazole-4-carboxylate: step 1/2. This is Phosphoribosylaminoimidazole-succinocarboxamide synthase from Rhodococcus opacus (strain B4).